The primary structure comprises 130 residues: Small ribosomal subunit protein uS8 (130 aa).

Belongs to the universal ribosomal protein uS8 family. Part of the 30S ribosomal subunit.

One of the primary rRNA binding proteins, it binds directly to 16S rRNA central domain where it helps coordinate assembly of the platform of the 30S subunit. The chain is Small ribosomal subunit protein uS8 from Methanococcus aeolicus (strain ATCC BAA-1280 / DSM 17508 / OCM 812 / Nankai-3).